Consider the following 383-residue polypeptide: Na(+)/H(+) antiporter NhaA (383 aa).

The next 11 helical transmembrane spans lie at 10–30, 56–76, 91–111, 121–141, 150–170, 174–194, 206–226, 254–274, 289–308, 327–347, and 355–375; these read LIGGLILFSAALLAIVVNNSP, LMHWINDGLMAIYFLYIGLEI, IITPAIAAFAGLAMPSLIYLS, GWAIPSATDIAFTLGILALLG, LLVITIAIFDDIAAIAIIAIF, SLSLLSLSLGTLFILAMIICN, VVLGFFAWFCTIKSGVHATLA, PWIIYFILPVFAFANAGISFS, IIWGLFVGKQLGIFSILAVF, GISLLCGIGFTMSLFIGVLAF, and AIKIGVVVGSVLSGFFGYIVL.

It belongs to the NhaA Na(+)/H(+) (TC 2.A.33) antiporter family.

It localises to the cell inner membrane. It carries out the reaction Na(+)(in) + 2 H(+)(out) = Na(+)(out) + 2 H(+)(in). Na(+)/H(+) antiporter that extrudes sodium in exchange for external protons. This Francisella tularensis subsp. tularensis (strain SCHU S4 / Schu 4) protein is Na(+)/H(+) antiporter NhaA.